We begin with the raw amino-acid sequence, 352 residues long: Peptide chain release factor 1 (352 aa).

Gln229 bears the N5-methylglutamine mark.

This sequence belongs to the prokaryotic/mitochondrial release factor family. In terms of processing, methylated by PrmC. Methylation increases the termination efficiency of RF1.

The protein resides in the cytoplasm. In terms of biological role, peptide chain release factor 1 directs the termination of translation in response to the peptide chain termination codons UAG and UAA. The chain is Peptide chain release factor 1 from Acidiphilium cryptum (strain JF-5).